Reading from the N-terminus, the 614-residue chain is Vitamin B12 transporter BtuB (614 aa).

Positions 1-20 are cleaved as a signal peptide; the sequence is MIKKASLLTACSVTAFSAWA. The Periplasmic segment spans residues 21–157; it reads QDTSPDTLVV…NIITTRDEPG (137 aa). The short motif at 26–33 is the TonB box element; sequence DTLVVTAN. Positions 38-152 constitute a TBDR plug domain; the sequence is PRSTVLAPTT…IGGVVNIITT (115 aa). Cyanocob(III)alamin-binding positions include Leu83, Ser85, Asn92, and 110-111; that span reads VS. Positions 155-614 constitute a TBDR beta-barrel domain; sequence EPGTEISAGW…EYTLSGSYTF (460 aa). The chain crosses the membrane as a beta stranded span at residues 158–165; the sequence is TEISAGWG. At 166-168 the chain is on the extracellular side; it reads SNS. A beta stranded membrane pass occupies residues 169–178; it reads YQNYDVSTQQ. Residues 179-183 lie on the Periplasmic side of the membrane; the sequence is QLGDK. The beta stranded transmembrane segment at 184-195 threads the bilayer; sequence TRVTLLGDYAHT. The Extracellular segment spans residues 196–216; it reads HGYDVVAYGNTGTQAQTDNDG. 4 residues coordinate Ca(2+): Asp199, Gln211, Asp213, and Asp215. A beta stranded transmembrane segment spans residues 217 to 227; it reads FLSKTLYGALE. Over 228-231 the chain is Periplasmic; the sequence is HNFT. A beta stranded membrane pass occupies residues 232 to 248; it reads DAWSGFVRGYGYDNRTN. Residues Tyr249 and Asp250 each coordinate Ca(2+). Topologically, residues 249–262 are extracellular; the sequence is YDAYYSPGSPLLDT. Ala251 is a cyanocob(III)alamin binding site. Asp261 provides a ligand contact to Ca(2+). Residues 263–277 traverse the membrane as a beta stranded segment; that stretch reads RKLYSQSWDAGLRYN. Residue Gly278 is a topological domain, periplasmic. Residues 279–296 form a beta stranded membrane-spanning segment; that stretch reads ELIKSQLITSYSHSKDYN. Topologically, residues 297–308 are extracellular; that stretch reads YDPHYGRYDSSA. Thr309 is a binding site for cyanocob(III)alamin. A beta stranded membrane pass occupies residues 309 to 325; it reads TLDEMKQYTVQWANNVI. The Periplasmic segment spans residues 326 to 327; that stretch reads VG. Residues 328–337 form a beta stranded membrane-spanning segment; the sequence is HGSIGAGVDW. Over 338-352 the chain is Extracellular; that stretch reads QKQTTTPGTGYVEDG. A beta stranded membrane pass occupies residues 353 to 369; it reads YDQRNTGIYLTGLQQVG. Residue Asp370 is a topological domain, periplasmic. The beta stranded transmembrane segment at 371–381 threads the bilayer; the sequence is FTFEGAARSDD. Residues 382–384 lie on the Extracellular side of the membrane; it reads NSQ. The chain crosses the membrane as a beta stranded span at residues 385-400; sequence FGRHGTWQTSAGWEFI. Topologically, residues 401-402 are periplasmic; it reads EG. A beta stranded membrane pass occupies residues 403-417; that stretch reads YRFIASYGTSYKAPN. The Extracellular portion of the chain corresponds to 418-433; the sequence is LGQLYGFYGNPNLDPE. Residues 434–443 traverse the membrane as a beta stranded segment; sequence KSKQWEGAFE. The Periplasmic segment spans residues 444–448; the sequence is GLTAG. The beta stranded transmembrane segment at 449-458 threads the bilayer; that stretch reads VNWRISGYRN. The Extracellular portion of the chain corresponds to 459–472; the sequence is DVSDLIDYDDHTLK. The beta stranded transmembrane segment at 473–490 threads the bilayer; it reads YYNEGKARIKGVEATANF. At 491 to 493 the chain is on the periplasmic side; the sequence is DTG. Residues 494-509 form a beta stranded membrane-spanning segment; sequence PLTHTVSYDYVDARNA. At 510-516 the chain is on the extracellular side; sequence ITDTPLL. Arg517 is a cyanocob(III)alamin binding site. A beta stranded transmembrane segment spans residues 517–529; the sequence is RRAKQQVKYQLDW. At 530 to 534 the chain is on the periplasmic side; sequence QLYDF. A beta stranded transmembrane segment spans residues 535 to 550; it reads DWGITYQYLGTRYDKD. Tyr551 is a binding site for cyanocob(III)alamin. At 551–557 the chain is on the extracellular side; that stretch reads YSSYPYQ. The chain crosses the membrane as a beta stranded span at residues 558 to 572; sequence TVKMGGVSLWDLAVA. Residues 573–584 lie on the Periplasmic side of the membrane; that stretch reads YPVTSHLTVRGK. The beta stranded transmembrane segment at 585–596 threads the bilayer; sequence IANLFDKDYETV. Over 597–601 the chain is Extracellular; it reads YGYQT. Positions 597–614 match the TonB C-terminal box motif; sequence YGYQTAGREYTLSGSYTF. Residues 602–614 traverse the membrane as a beta stranded segment; it reads AGREYTLSGSYTF.

Belongs to the TonB-dependent receptor family. BtuB (TC 1.B.14.3.1) subfamily. In terms of assembly, interacts with TonB. (Microbial infection) The hairpin motif of the receptor-binding domain of colicin E3 (ColE3) interacts with BtuB without displacing BtuB's central plug. An N-terminal fragment of E3 binds OmpF; trimeric complexes with ColE3, BtuB and OmpF can be cross-linked and immunoprecipitated.

The protein resides in the cell outer membrane. Its activity is regulated as follows. Calcium increases vitamin B12 binding affinity by a factor of 50-100. With respect to regulation, (Microbial infection) Colicins E1, E3 and K inhibit cyanocobalamin (CN-B12) uptake; E1 and E3 inhibit binding of CN-B12 to cells while colicin K inhibits a later, energy-dependent step of CN-B12. In terms of biological role, involved in the active translocation of vitamin B12 (cyanocobalamin) across the outer membrane to the periplasmic space. It derives its energy for transport by interacting with the trans-periplasmic membrane protein TonB. Its function is as follows. (Microbial infection) Acts as a receptor for bacteriophages BF23 and C1, and for A and E colicins. Cyanocobalamin (CN-B12) in solid medium protects against colicins E1 and E3. Does not act as the translocon for colicin E3 (ColE3). The translocon is OmpF; trimeric complexes with ColE3, BtuB and OmpF can be cross-linked and immunoprecipitated. This Escherichia coli (strain K12) protein is Vitamin B12 transporter BtuB.